A 703-amino-acid chain; its full sequence is MAAATGDPGLSKLQFAPFSSALDVGFWHELTQKKLNEYRLDEAPKDIKGYYYNGDSAGLPARLTLEFSAFDMSAPTPARCCPAIGTLYNTNTLESFKTADKKLLLEQAANEIWESIKSGTALENPVLLNKFLLLTFADLKKYHFYYWFCYPALCLPESLPLIQGPVGLDQRFSLKQIEALECAYDNLCQTEGVTALPYFLIKYDENMVLVSLLKHYSDFFQGQRTKITIGVYDPCNLAQYPGWPLRNFLVLAAHRWSSSFQSVEVVCFRDRTMQGARDVAHSIIFEVKLPEMAFSPDCPKAVGWEKNQKGGMGPRMVNLSECMDPKRLAESSVDLNLKLMCWRLVPTLDLDKVVSVKCLLLGAGTLGCNVARTLMGWGVRHITFVDNAKISYSNPVRQPLYEFEDCLGGGKPKALAAADRLQKIFPGVNARGFNMSIPMPGHPVNFSSVTLEQARRDVEQLEQLIESHDVVFLLMDTRESRWLPAVIAASKRKLVINAALGFDTFVVMRHGLKKPKQQGAGDLCPNHPVASADLLGSSLFANIPGYKLGCYFCNDVVAPGDSTRDRTLDQQCTVSRPGLAVIAGALAVELMVSVLQHPEGGYAIASSSDDRMNEPPTSLGLVPHQIRGFLSRFDNVLPVSLAFDKCTACSSKVLDQYEREGFNFLAKVFNSSHSFLEDLTGLTLLHQETQAAEIWDMSDDETI.

N-acetylalanine is present on Ala-2. Positions 15–17 (FAP) match the FAP motif motif. Lys-45 is covalently cross-linked (Glycyl lysine isopeptide (Lys-Gly) (interchain with G-Cter in ubiquitin)). Cys-572 (glycyl thioester intermediate) is an active-site residue. Ser-698 carries the phosphoserine modification.

This sequence belongs to the ATG7 family. Homodimer. Interacts with ATG3; this interaction is essential for the transfer of ATG8-like proteins's thioester from ATG7 to ATG3 and plays a role in the conjugation of ATG12 to ATG5. Interacts with ATG12. Forms intermediate conjugates with GABARAPL1. Forms intermediate conjugates with ATG8-like proteins such as GABARAP, GABARAPL2 or MAP1LC3A. Interacts with EP300 acetyltransferase. Interacts with FOXO1. Acetylated by EP300. In terms of processing, polyubiquitinated on Lys-45 via 'Lys-63'-linked ubiquitin by TRIM32; this modification positiely regulates ATG8 and ATG12 activating enzyme activity leading to initiation of autophagy under metabolic stress. Widely expressed, especially in kidney, liver, lymph nodes and bone marrow.

It localises to the cytoplasm. The protein resides in the preautophagosomal structure. Functionally, E1-like activating enzyme involved in the 2 ubiquitin-like systems required for cytoplasm to vacuole transport (Cvt) and autophagy. Activates ATG12 for its conjugation with ATG5 as well as the ATG8 family proteins for their conjugation with phosphatidylethanolamine. Both systems are needed for the ATG8 association to Cvt vesicles and autophagosomes membranes. Required for autophagic death induced by caspase-8 inhibition. Facilitates LC3-I lipidation with phosphatidylethanolamine to form LC3-II which is found on autophagosomal membranes. Required for mitophagy which contributes to regulate mitochondrial quantity and quality by eliminating the mitochondria to a basal level to fulfill cellular energy requirements and preventing excess ROS production. Modulates p53/TP53 activity to regulate cell cycle and survival during metabolic stress. Also plays a key role in the maintenance of axonal homeostasis, the prevention of axonal degeneration, the maintenance of hematopoietic stem cells, the formation of Paneth cell granules, as well as in adipose differentiation. Plays a role in regulating the liver clock and glucose metabolism by mediating the autophagic degradation of CRY1 (clock repressor) in a time-dependent manner. The sequence is that of Ubiquitin-like modifier-activating enzyme ATG7 from Homo sapiens (Human).